The primary structure comprises 110 residues: Large ribosomal subunit protein uL22 (110 aa).

This sequence belongs to the universal ribosomal protein uL22 family. As to quaternary structure, part of the 50S ribosomal subunit.

This protein binds specifically to 23S rRNA; its binding is stimulated by other ribosomal proteins, e.g. L4, L17, and L20. It is important during the early stages of 50S assembly. It makes multiple contacts with different domains of the 23S rRNA in the assembled 50S subunit and ribosome. In terms of biological role, the globular domain of the protein is located near the polypeptide exit tunnel on the outside of the subunit, while an extended beta-hairpin is found that lines the wall of the exit tunnel in the center of the 70S ribosome. The polypeptide is Large ribosomal subunit protein uL22 (Yersinia pseudotuberculosis serotype O:1b (strain IP 31758)).